The following is a 39-amino-acid chain: SGSKTAKIGDGCFGVRLDRIGSTSGMGCGGVPKPTPGGS.

Residues 1–8 constitute a propeptide that is removed on maturation; it reads SGSKTAKI. The cysteines at positions 12 and 28 are disulfide-linked.

It belongs to the natriuretic peptide family. As to expression, expressed by the venom gland.

It is found in the secreted. Its function is as follows. Snake venom natriuretic peptide that targets both NPR1 and NPR2. Exhibits hypotensive and vasodepressor activities. The polypeptide is Natriuretic peptide HsNP-a (Hoplocephalus stephensii (Stephens's banded snake)).